We begin with the raw amino-acid sequence, 154 residues long: Putative pre-16S rRNA nuclease (154 aa).

This sequence belongs to the YqgF nuclease family.

It is found in the cytoplasm. In terms of biological role, could be a nuclease involved in processing of the 5'-end of pre-16S rRNA. This chain is Putative pre-16S rRNA nuclease, found in Rickettsia canadensis (strain McKiel).